The primary structure comprises 648 residues: Biosynthetic arginine decarboxylase (648 aa).

K109 carries the N6-(pyridoxal phosphate)lysine modification. 291–301 (IDVGGGLGIDF) lines the substrate pocket.

Belongs to the Orn/Lys/Arg decarboxylase class-II family. SpeA subfamily. Requires Mg(2+) as cofactor. The cofactor is pyridoxal 5'-phosphate.

It catalyses the reaction L-arginine + H(+) = agmatine + CO2. Its pathway is amine and polyamine biosynthesis; agmatine biosynthesis; agmatine from L-arginine: step 1/1. Its function is as follows. Catalyzes the biosynthesis of agmatine from arginine. This is Biosynthetic arginine decarboxylase from Prochlorococcus marinus (strain AS9601).